A 470-amino-acid polypeptide reads, in one-letter code: Ribulose bisphosphate carboxylase large chain (470 aa).

Substrate is bound by residues Asn115 and Thr165. The active-site Proton acceptor is the Lys167. Lys169 is a substrate binding site. 3 residues coordinate Mg(2+): Lys193, Asp195, and Glu196. Lys193 carries the N6-carboxylysine modification. Residue His286 is the Proton acceptor of the active site. The substrate site is built by Arg287, His319, and Ser371.

The protein belongs to the RuBisCO large chain family. Type I subfamily. As to quaternary structure, heterohexadecamer of 8 large chains and 8 small chains. It depends on Mg(2+) as a cofactor.

The protein resides in the carboxysome. It carries out the reaction 2 (2R)-3-phosphoglycerate + 2 H(+) = D-ribulose 1,5-bisphosphate + CO2 + H2O. The catalysed reaction is D-ribulose 1,5-bisphosphate + O2 = 2-phosphoglycolate + (2R)-3-phosphoglycerate + 2 H(+). Functionally, ruBisCO catalyzes two reactions: the carboxylation of D-ribulose 1,5-bisphosphate, the primary event in carbon dioxide fixation, as well as the oxidative fragmentation of the pentose substrate in the photorespiration process. Both reactions occur simultaneously and in competition at the same active site. The sequence is that of Ribulose bisphosphate carboxylase large chain from Prochlorococcus marinus (strain SARG / CCMP1375 / SS120).